Reading from the N-terminus, the 435-residue chain is Trigger factor (435 aa).

The PPIase FKBP-type domain occupies 164–249 (GDFAKFDFEG…LHEIQGKKAG (86 aa)).

The protein belongs to the FKBP-type PPIase family. Tig subfamily.

The protein resides in the cytoplasm. The catalysed reaction is [protein]-peptidylproline (omega=180) = [protein]-peptidylproline (omega=0). Involved in protein export. Acts as a chaperone by maintaining the newly synthesized protein in an open conformation. Functions as a peptidyl-prolyl cis-trans isomerase. This Campylobacter fetus subsp. fetus (strain 82-40) protein is Trigger factor.